A 559-amino-acid polypeptide reads, in one-letter code: Hepatocyte nuclear factor 1-alpha (559 aa).

The HNF-p1 domain occupies 13–44; that stretch reads GPGRLSALQEQLIWALLGSGLSREVLVHALGE. The segment at 14-43 is dimerization; the sequence is PGRLSALQEQLIWALLGSGLSREVLVHALG. Residues 49 to 62 are compositionally biased toward basic and acidic residues; the sequence is RVTPGAEKGDRGDG. The tract at residues 49–73 is disordered; that stretch reads RVTPGAEKGDRGDGESSEEGEMDFP. Residues 78-173 form the POU-specific atypical domain; the sequence is QELEALAPEE…ISQQFTNARH (96 aa). 6 interaction with DNA regions span residues 121-123, 134-140, 146-149, 192-195, 252-254, and 259-262; these read QRE, HLSQHLN, KNQK, RFKW, RVY, and NRRK. Positions 186-194 match the Nuclear localization signal motif; sequence RKGRRNRFK. Residues 188 to 268 constitute a DNA-binding region (homeobox; HNF1-type); that stretch reads GRRNRFKWGP…NRRKEEAFRH (81 aa). The segment at 492 to 559 is disordered; the sequence is TDPEEQTDQP…IPAQMVSTAQ (68 aa). Residues 499–522 show a composition bias toward polar residues; it reads DQPIQEDSLHLQSPSPVPVSSGNL.

The protein belongs to the HNF1 homeobox family. In terms of assembly, binds DNA as a dimer. In terms of tissue distribution, expressed in liver, intestine, spleen and kidney.

It is found in the nucleus. Its function is as follows. Transcriptional activator that regulates the tissue specific expression of multiple genes, especially in pancreas and liver. Binds to the promoter of the albumin gene. This Salmo salar (Atlantic salmon) protein is Hepatocyte nuclear factor 1-alpha (hnf1a).